We begin with the raw amino-acid sequence, 880 residues long: MNDNINIAKTYDPKEFEERIYKMWEEGEYFTPKVDKDKKPYTIVMPPPNITGKLHLGHALDNSMQDFLIRVKRMQGYSTLWLPGQDHASIATEVKVENELLKTGLKKKEMGREAFLERVWEWSEEYRGRIRDQLKKLGSSADFTRESFTMDDNLDKAVRAVFVKLYEEGLIYKGNRIVNWCPKCMTALSDAEIEYEENYGNFWHVKYPLVDSEEYLEIATTRPETMLGDTAVAVNPNDERYKHLIGKKLMLPLVNREIPIVADDYVDVEFGTGAVKITPAHDPNDYEVGKRHDLEEIIIMNENGTINELGGKYSGMDRYEARKAIVEDLKKEGFLVKVKEHIHNVSCHDRCNTIIEPMISKQWYVKMKELAKPAIEVVKSGEIKFVPERFDKTYFNWMENIQDWCISRQLWWGHRIPVWYCKDCGETIVSLEEAKKCSKCSSENLIQDEDVLDTWFSSALWPFSTLGWPDKTEDLEYFYPTDVLATGYDIIFFWVARMIFSGLHNMKEIPFKTVLIHGIVRDSEGKKMSKSLGNGVDPLEVIDKYGADALRFMLITGNAPGNDIRFYEERVESARNFANKIWNASRYVMMNLDKNLMEKYKDCKDYNIADTWILSRLNEVIKEVTDNIEKFELGMASQKVYDFMWNEFCDWYIELSKPVLYGEDEKAKGVTFNVLFNVLTSGLKLLHPIMPFITEEIFINIQEEEKTITTSKWPEFKEELKNEEVEKKMSHVIEAIKAIRNVRIEMDVPPSRKAKIMIYALDGIDAFKDGKIYFEKLASASEVEFLNSKEEAPENAVSAVTKGAEIYIPLFDLVDLEKEMERLNKEREKLEKEIERVDKKLSNENFVKKAPEAVVNEEKAKGEKYKEMLEAVLERIKSLK.

Residues 48–58 carry the 'HIGH' region motif; sequence PNITGKLHLGH. Residues 527–531 carry the 'KMSKS' region motif; it reads KMSKS. Position 530 (K530) interacts with ATP. 2 coiled-coil regions span residues 717–741 and 810–880; these read KEEL…AIRN and LFDL…KSLK.

This sequence belongs to the class-I aminoacyl-tRNA synthetase family. ValS type 1 subfamily. As to quaternary structure, monomer.

It localises to the cytoplasm. The catalysed reaction is tRNA(Val) + L-valine + ATP = L-valyl-tRNA(Val) + AMP + diphosphate. In terms of biological role, catalyzes the attachment of valine to tRNA(Val). As ValRS can inadvertently accommodate and process structurally similar amino acids such as threonine, to avoid such errors, it has a 'posttransfer' editing activity that hydrolyzes mischarged Thr-tRNA(Val) in a tRNA-dependent manner. The chain is Valine--tRNA ligase from Clostridium tetani (strain Massachusetts / E88).